The primary structure comprises 310 residues: GPN-loop GTPase 2 (310 aa).

The residue at position 2 (Ala-2) is an N-acetylalanine. Residue Gly-19–Thr-24 coordinates GTP. Positions Gly-76 to Asn-78 match the Gly-Pro-Asn (GPN)-loop; involved in dimer interface motif. Residue Ser-178–Asp-181 coordinates GTP.

Belongs to the GPN-loop GTPase family. As to quaternary structure, heterodimers with GPN1 or GPN3. Binds to RNA polymerase II (RNAPII).

Small GTPase required for proper localization of RNA polymerase II and III (RNAPII and RNAPIII). May act at an RNAP assembly step prior to nuclear import. The polypeptide is GPN-loop GTPase 2 (Sus scrofa (Pig)).